Here is a 704-residue protein sequence, read N- to C-terminus: DNA ligase (704 aa).

Residues Asp-43 to Asp-47, Ser-92 to Leu-93, and Glu-124 contribute to the NAD(+) site. The active-site N6-AMP-lysine intermediate is the Lys-126. 4 residues coordinate NAD(+): Arg-147, Glu-182, Lys-298, and Lys-322. Positions 427, 430, 445, and 451 each coordinate Zn(2+). A BRCT domain is found at Pro-625–Ala-704.

It belongs to the NAD-dependent DNA ligase family. LigA subfamily. It depends on Mg(2+) as a cofactor. Mn(2+) is required as a cofactor.

It carries out the reaction NAD(+) + (deoxyribonucleotide)n-3'-hydroxyl + 5'-phospho-(deoxyribonucleotide)m = (deoxyribonucleotide)n+m + AMP + beta-nicotinamide D-nucleotide.. In terms of biological role, DNA ligase that catalyzes the formation of phosphodiester linkages between 5'-phosphoryl and 3'-hydroxyl groups in double-stranded DNA using NAD as a coenzyme and as the energy source for the reaction. It is essential for DNA replication and repair of damaged DNA. The protein is DNA ligase of Cereibacter sphaeroides (strain KD131 / KCTC 12085) (Rhodobacter sphaeroides).